We begin with the raw amino-acid sequence, 180 residues long: uncharacterized protein (180 aa).

Helical transmembrane passes span 37–59 (VLHA…FPSF) and 128–147 (AGSA…VLFV).

The protein localises to the cell membrane. This is an uncharacterized protein from Treponema pallidum (strain Nichols).